The sequence spans 428 residues: L-gulono-1,4-lactone dehydrogenase (428 aa).

Residues 12–179 (QVCAPSAIVR…SQVTLQTVPL (168 aa)) enclose the FAD-binding PCMH-type domain.

This sequence belongs to the oxygen-dependent FAD-linked oxidoreductase family. A divalent metal cation is required as a cofactor.

The enzyme catalyses L-gulono-1,4-lactone + 2 Fe(III)-[cytochrome c] = L-ascorbate + 2 Fe(II)-[cytochrome c] + 3 H(+). Its pathway is cofactor biosynthesis; L-ascorbate biosynthesis. Oxidizes L-gulono-1,4-lactone to L-xylo-hexulonolactone which spontaneously isomerizes to L-ascorbate. This Mycobacterium tuberculosis (strain CDC 1551 / Oshkosh) protein is L-gulono-1,4-lactone dehydrogenase.